The chain runs to 443 residues: 23S rRNA (uracil(1939)-C(5))-methyltransferase RlmD (443 aa).

One can recognise a TRAM domain in the interval 8-66 (KPLPAEPIAAHIESFAHDGKGIAHVDGRVVFVDGALPGEDVTFVYTEIKRDYAAGRVVE). Positions 79, 85, 88, and 167 each coordinate [4Fe-4S] cluster. Positions 276, 305, 310, 326, 353, and 374 each coordinate S-adenosyl-L-methionine. C400 functions as the Nucleophile in the catalytic mechanism.

Belongs to the class I-like SAM-binding methyltransferase superfamily. RNA M5U methyltransferase family. RlmD subfamily.

It carries out the reaction uridine(1939) in 23S rRNA + S-adenosyl-L-methionine = 5-methyluridine(1939) in 23S rRNA + S-adenosyl-L-homocysteine + H(+). In terms of biological role, catalyzes the formation of 5-methyl-uridine at position 1939 (m5U1939) in 23S rRNA. In Methylococcus capsulatus (strain ATCC 33009 / NCIMB 11132 / Bath), this protein is 23S rRNA (uracil(1939)-C(5))-methyltransferase RlmD.